A 567-amino-acid chain; its full sequence is DNA ligase B (567 aa).

The active-site N6-AMP-lysine intermediate is lysine 126.

The protein belongs to the NAD-dependent DNA ligase family. LigB subfamily.

It catalyses the reaction NAD(+) + (deoxyribonucleotide)n-3'-hydroxyl + 5'-phospho-(deoxyribonucleotide)m = (deoxyribonucleotide)n+m + AMP + beta-nicotinamide D-nucleotide.. Its function is as follows. Catalyzes the formation of phosphodiester linkages between 5'-phosphoryl and 3'-hydroxyl groups in double-stranded DNA using NAD as a coenzyme and as the energy source for the reaction. This Pseudomonas putida (strain W619) protein is DNA ligase B.